Consider the following 137-residue polypeptide: Protein FrxA (137 aa).

In Pyrococcus furiosus (strain ATCC 43587 / DSM 3638 / JCM 8422 / Vc1), this protein is Protein FrxA (frxA).